We begin with the raw amino-acid sequence, 371 residues long: Queuine tRNA-ribosyltransferase (371 aa).

Catalysis depends on D90, which acts as the Proton acceptor. Residues 90 to 94 (DSGGF), D144, Q189, and G215 each bind substrate. Residues 246–252 (GVGTPEN) form an RNA binding region. D265 serves as the catalytic Nucleophile. Residues 270–274 (TRNAR) are RNA binding; important for wobble base 34 recognition. C303, C305, C308, and H334 together coordinate Zn(2+).

This sequence belongs to the queuine tRNA-ribosyltransferase family. As to quaternary structure, homodimer. Within each dimer, one monomer is responsible for RNA recognition and catalysis, while the other monomer binds to the replacement base PreQ1. Requires Zn(2+) as cofactor.

The enzyme catalyses 7-aminomethyl-7-carbaguanine + guanosine(34) in tRNA = 7-aminomethyl-7-carbaguanosine(34) in tRNA + guanine. The protein operates within tRNA modification; tRNA-queuosine biosynthesis. Its function is as follows. Catalyzes the base-exchange of a guanine (G) residue with the queuine precursor 7-aminomethyl-7-deazaguanine (PreQ1) at position 34 (anticodon wobble position) in tRNAs with GU(N) anticodons (tRNA-Asp, -Asn, -His and -Tyr). Catalysis occurs through a double-displacement mechanism. The nucleophile active site attacks the C1' of nucleotide 34 to detach the guanine base from the RNA, forming a covalent enzyme-RNA intermediate. The proton acceptor active site deprotonates the incoming PreQ1, allowing a nucleophilic attack on the C1' of the ribose to form the product. After dissociation, two additional enzymatic reactions on the tRNA convert PreQ1 to queuine (Q), resulting in the hypermodified nucleoside queuosine (7-(((4,5-cis-dihydroxy-2-cyclopenten-1-yl)amino)methyl)-7-deazaguanosine). This Helicobacter acinonychis (strain Sheeba) protein is Queuine tRNA-ribosyltransferase.